We begin with the raw amino-acid sequence, 225 residues long: Protein LiaH (225 aa).

Coiled-coil stretches lie at residues 58 to 151 (KKYE…KEHM) and 161 to 182 (ESAY…IRAN).

The protein belongs to the PspA/Vipp/IM30 family.

This Bacillus subtilis (strain 168) protein is Protein LiaH (liaH).